A 167-amino-acid chain; its full sequence is Schlafen-like protein (167 aa).

This sequence belongs to the Schlafen family. Subgroup poxviridae B3 subfamily.

The sequence is that of Schlafen-like protein from Bos taurus (Bovine).